We begin with the raw amino-acid sequence, 347 residues long: Holliday junction branch migration complex subunit RuvB (347 aa).

Residues 1–186 form a large ATPase domain (RuvB-L) region; it reads MKDENSINFL…FGITARFELY (186 aa). Residues Leu25, Arg26, Gly67, Lys70, Thr71, Thr72, 133-135, Arg176, Tyr186, and Arg223 each bind ATP; that span reads EDY. Residue Thr71 participates in Mg(2+) binding. A small ATPAse domain (RuvB-S) region spans residues 187–257; sequence SEIELVEIIK…IVAIGLEMLR (71 aa). The segment at 260 to 347 is head domain (RuvB-H); that stretch reads GEGLDEQDRN…NLNENQRVSF (88 aa). Positions 315 and 320 each coordinate DNA.

This sequence belongs to the RuvB family. Homohexamer. Forms an RuvA(8)-RuvB(12)-Holliday junction (HJ) complex. HJ DNA is sandwiched between 2 RuvA tetramers; dsDNA enters through RuvA and exits via RuvB. An RuvB hexamer assembles on each DNA strand where it exits the tetramer. Each RuvB hexamer is contacted by two RuvA subunits (via domain III) on 2 adjacent RuvB subunits; this complex drives branch migration. In the full resolvosome a probable DNA-RuvA(4)-RuvB(12)-RuvC(2) complex forms which resolves the HJ.

It is found in the cytoplasm. It carries out the reaction ATP + H2O = ADP + phosphate + H(+). The RuvA-RuvB-RuvC complex processes Holliday junction (HJ) DNA during genetic recombination and DNA repair, while the RuvA-RuvB complex plays an important role in the rescue of blocked DNA replication forks via replication fork reversal (RFR). RuvA specifically binds to HJ cruciform DNA, conferring on it an open structure. The RuvB hexamer acts as an ATP-dependent pump, pulling dsDNA into and through the RuvAB complex. RuvB forms 2 homohexamers on either side of HJ DNA bound by 1 or 2 RuvA tetramers; 4 subunits per hexamer contact DNA at a time. Coordinated motions by a converter formed by DNA-disengaged RuvB subunits stimulates ATP hydrolysis and nucleotide exchange. Immobilization of the converter enables RuvB to convert the ATP-contained energy into a lever motion, pulling 2 nucleotides of DNA out of the RuvA tetramer per ATP hydrolyzed, thus driving DNA branch migration. The RuvB motors rotate together with the DNA substrate, which together with the progressing nucleotide cycle form the mechanistic basis for DNA recombination by continuous HJ branch migration. Branch migration allows RuvC to scan DNA until it finds its consensus sequence, where it cleaves and resolves cruciform DNA. The chain is Holliday junction branch migration complex subunit RuvB from Borreliella afzelii (strain PKo) (Borrelia afzelii).